Here is a 376-residue protein sequence, read N- to C-terminus: ORC1-type DNA replication protein 2 (376 aa).

ATP contacts are provided by residues 73 to 77 (TGKTS), Tyr209, and Arg221.

Belongs to the CDC6/cdc18 family.

Its function is as follows. Involved in regulation of DNA replication. In Archaeoglobus fulgidus (strain ATCC 49558 / DSM 4304 / JCM 9628 / NBRC 100126 / VC-16), this protein is ORC1-type DNA replication protein 2 (cdc6-2).